The primary structure comprises 201 residues: 3-isopropylmalate dehydratase small subunit (201 aa).

The protein belongs to the LeuD family. LeuD type 1 subfamily. Heterodimer of LeuC and LeuD.

The catalysed reaction is (2R,3S)-3-isopropylmalate = (2S)-2-isopropylmalate. Its pathway is amino-acid biosynthesis; L-leucine biosynthesis; L-leucine from 3-methyl-2-oxobutanoate: step 2/4. In terms of biological role, catalyzes the isomerization between 2-isopropylmalate and 3-isopropylmalate, via the formation of 2-isopropylmaleate. This is 3-isopropylmalate dehydratase small subunit from Cronobacter sakazakii (strain ATCC BAA-894) (Enterobacter sakazakii).